The chain runs to 256 residues: Peroxisomal membrane protein PMP30A (256 aa).

The protein belongs to the peroxin-11 family.

It localises to the peroxisome membrane. Its function is as follows. Involved in peroxisomal proliferation. Could participate in peroxisomal elongation or fission. May be involved in parceling of peroxisomes into regular quanta. The sequence is that of Peroxisomal membrane protein PMP30A (PEX11A) from Candida boidinii (Yeast).